Consider the following 130-residue polypeptide: Aspartate 1-decarboxylase (130 aa).

The active-site Schiff-base intermediate with substrate; via pyruvic acid is the serine 25. Serine 25 carries the post-translational modification Pyruvic acid (Ser). Position 57 (threonine 57) interacts with substrate. Tyrosine 58 functions as the Proton donor in the catalytic mechanism. 73-75 is a binding site for substrate; the sequence is GAT.

The protein belongs to the PanD family. In terms of assembly, heterooctamer of four alpha and four beta subunits. Pyruvate serves as cofactor. Post-translationally, is synthesized initially as an inactive proenzyme, which is activated by self-cleavage at a specific serine bond to produce a beta-subunit with a hydroxyl group at its C-terminus and an alpha-subunit with a pyruvoyl group at its N-terminus.

It is found in the cytoplasm. It carries out the reaction L-aspartate + H(+) = beta-alanine + CO2. The protein operates within cofactor biosynthesis; (R)-pantothenate biosynthesis; beta-alanine from L-aspartate: step 1/1. Its function is as follows. Catalyzes the pyruvoyl-dependent decarboxylation of aspartate to produce beta-alanine. This Lactiplantibacillus plantarum (strain ATCC BAA-793 / NCIMB 8826 / WCFS1) (Lactobacillus plantarum) protein is Aspartate 1-decarboxylase.